An 879-amino-acid polypeptide reads, in one-letter code: Levansucrase (879 aa).

A signal peptide spans 1–37 (MTKEHKKMYKAGKYWAVATLVSASILMEVGVTTHADA). 7 consecutive repeat copies span residues 66 to 81 (DNATSGSTKQESSIAN), 82 to 97 (DNATSGSTKQESSIAN), 98 to 113 (DNATSGSTKQESSIAN), 114 to 129 (DNATSGSTKQESSVAN), 130 to 145 (DNATSGSTKQESSVAN), 146 to 161 (DNATSGSTKQESSVAN), and 162 to 177 (DNATSGSTKQESSVAN). Residues 66–177 (DNATSGSTKQ…STKQESSVAN (112 aa)) are 7 X 16 AA tandem repeats of D-N-A-T-S-G-S-T-K-Q-E-S-S-[IV]-A-N. Composition is skewed to polar residues over residues 66–180 (DNAT…NDTK) and 189–213 (NTSNTENDNSQLKQTNNEQPSAATQ). Residues 66-213 (DNATSGSTKQ…NNEQPSAATQ (148 aa)) form a disordered region. Sucrose is bound by residues Trp311, Asp312, and Ser382. Asp312 functions as the Nucleophile in the catalytic mechanism. Residue Asp460 coordinates Ca(2+). Sucrose is bound by residues Arg465 and Asp466. Residues Gln491, Leu528, Asn530, and Asp562 each contribute to the Ca(2+) site. Sucrose is bound at residue Glu563. Glu565 acts as the Proton donor/acceptor in catalysis. Arg583 is a sucrose binding site. Residues 743 to 830 (SSGLGLKPHQ…TPAKPVQAGQ (88 aa)) form a disordered region. The span at 754–821 (VNPSQPTTPA…KPVNPSQPTT (68 aa)) shows a compositional bias: polar residues. Positions 841 to 845 (LPQTG) match the LPXTG sorting signal motif. Residue Thr844 is modified to Pentaglycyl murein peptidoglycan amidated threonine. A propeptide spans 845–879 (GENNSQSQTMSFIGILLAMFGSLLGFLGIKKRRND) (removed by sortase).

It belongs to the glycosyl hydrolase 68 family.

Its subcellular location is the secreted. The protein localises to the cell wall. It catalyses the reaction [6)-beta-D-fructofuranosyl-(2-&gt;](n) alpha-D-glucopyranoside + sucrose = [6)-beta-D-fructofuranosyl-(2-&gt;](n+1) alpha-D-glucopyranoside + D-glucose. Its activity is regulated as follows. Ca(2+) may play an important structural role and promote stability of levansucrase. Its function is as follows. Fructosyltransferase that catalyzes the polymerization of the fructose moiety of sucrose to produce levan polymer and the fructo-oligosaccharide (FOS) 1-kestose. Also displays sucrose hydrolase activity. This Fructilactobacillus sanfranciscensis (Lactobacillus sanfranciscensis) protein is Levansucrase.